The chain runs to 361 residues: Collagenase (361 aa).

It belongs to the peptidase U32 family. Homodimer. The cofactor is a metal cation.

With respect to regulation, activity somewhat enhanced by calcium ions, inhibited by zinc and Fe(3+) ions and by p-chloromercuribenzoic acid and EDTA. Activity is enhanced by salivary peptide cystatin and reduced by salivary peptide histatin. Has collagenase activity. Active on soluble collagen, reconstituted type I collagen, heat denatured type I collagen and azocoll, but not gelatin or the synthetic bacterial collagenase substrate PZ-PLGPA. May play a role in virulence. The protein is Collagenase of Porphyromonas gingivalis (Bacteroides gingivalis).